The following is a 611-amino-acid chain: E-selectin (611 aa).

A signal peptide spans 1–22 (MITSQLLPALTLVLLLFKEGGA). The 118-residue stretch at 23-140 (WSYNASTEAM…CDKKKLALCY (118 aa)) folds into the C-type lectin domain. Over 23 to 557 (WSYNASTEAM…CEAPTESSIP (535 aa)) the chain is Extracellular. Asn26 carries an N-linked (GlcNAc...) asparagine glycan. Disulfide bonds link Cys41-Cys139, Cys112-Cys131, Cys144-Cys155, Cys149-Cys164, Cys166-Cys175, Cys181-Cys225, Cys194-Cys207, Cys211-Cys238, Cys243-Cys287, Cys256-Cys269, Cys273-Cys300, Cys305-Cys350, Cys336-Cys363, Cys368-Cys413, Cys399-Cys426, Cys431-Cys476, Cys462-Cys489, Cys494-Cys535, and Cys521-Cys548. Ca(2+) contacts are provided by Glu102, Asn104, and Glu110. Residues 102–110 (EPNNKQNDE), 114–119 (EIYIKR), and 127–129 (NDE) each bind a carbohydrate. Asn127 and Asp128 together coordinate Ca(2+). Residues 141–176 (TAACTPTSCSGHGECVETVNNYTCKCHPGFRGLRCE) form the EGF-like domain. An N-linked (GlcNAc...) asparagine glycan is attached at Asn161. Sushi domains follow at residues 179–240 (VTCQ…ACNV) and 241–302 (VECS…TCKA). The N-linked (GlcNAc...) asparagine glycan is linked to Asn204. An N-linked (GlcNAc...) asparagine glycan is attached at Asn266. 2 N-linked (GlcNAc...) asparagine glycosylation sites follow: Asn313 and Asn333. Sushi domains lie at 316 to 365 (VSCS…VCKA), 367 to 428 (QCKA…TCEA), 430 to 491 (KCDA…SCQV), and 492 to 550 (VQCF…TCEA). An N-linked (GlcNAc...) asparagine glycan is attached at Asn528. The chain crosses the membrane as a helical span at residues 558 to 579 (LAVGLTAGGTSLLTVASFLLWL). Over 580–611 (LKRLRKRAKKFVPASSCQSLQSDGSYHMPCSI) the chain is Cytoplasmic.

This sequence belongs to the selectin/LECAM family. In terms of assembly, interacts with SELPLG/PSGL1 and PODXL2 through the sialyl Lewis X epitope. SELPLG sulfation appears not to be required for this interaction.

It is found in the cell membrane. Functionally, cell-surface glycoprotein having a role in immunoadhesion. Mediates in the adhesion of blood neutrophils in cytokine-activated endothelium through interaction with SELPLG/PSGL1. May have a role in capillary morphogenesis. The polypeptide is E-selectin (SELE) (Canis lupus familiaris (Dog)).